The chain runs to 150 residues: Ribosome-binding factor A (150 aa).

A disordered region spans residues 131-150; the sequence is LSHDDDEDGGADEAPRNGDE.

Belongs to the RbfA family. Monomer. Binds 30S ribosomal subunits, but not 50S ribosomal subunits or 70S ribosomes.

It localises to the cytoplasm. Its function is as follows. One of several proteins that assist in the late maturation steps of the functional core of the 30S ribosomal subunit. Associates with free 30S ribosomal subunits (but not with 30S subunits that are part of 70S ribosomes or polysomes). Required for efficient processing of 16S rRNA. May interact with the 5'-terminal helix region of 16S rRNA. The sequence is that of Ribosome-binding factor A from Brucella melitensis biotype 2 (strain ATCC 23457).